A 302-amino-acid polypeptide reads, in one-letter code: Nucleotide-binding protein Rsph17029_0317 (302 aa).

15–22 (GPSGAGRT) serves as a coordination point for ATP. 62–65 (DVRN) provides a ligand contact to GTP.

The protein belongs to the RapZ-like family.

Its function is as follows. Displays ATPase and GTPase activities. In Cereibacter sphaeroides (strain ATCC 17029 / ATH 2.4.9) (Rhodobacter sphaeroides), this protein is Nucleotide-binding protein Rsph17029_0317.